We begin with the raw amino-acid sequence, 492 residues long: Protein odr-4 homolog (492 aa).

The interval 251-270 (LQPTSTTGGTATASSNTTDS) is disordered. A compositionally biased stretch (low complexity) spans 254–268 (TSTTGGTATASSNTT). A helical membrane pass occupies residues 469–489 (MVGIAVALLVLLSSVALHFVL).

Belongs to the ODR-4 family.

It is found in the membrane. Its function is as follows. May play a role in the trafficking of a subset of G-protein coupled receptors. This chain is Protein odr-4 homolog, found in Drosophila melanogaster (Fruit fly).